The following is a 392-amino-acid chain: Nuclear speckle splicing regulatory protein 1 homolog (392 aa).

Disordered stretches follow at residues 1-73 (MASK…IFDY), 113-169 (RQLE…AFND), and 187-357 (LLND…ARLD). 5 stretches are compositionally biased toward basic and acidic residues: residues 54-65 (KAAEREHQKAEA), 113-132 (RQLE…REKE), 149-160 (KQQEEVKKHREQ), 205-238 (QKNV…KSIY), and 313-357 (KSIE…ARLD). The stretch at 76-132 (NYDEIQAIKNEKKEEARKADKNRESKYAENIIKAHARRQLEQFSREERQQLREREKE) forms a coiled coil.

Belongs to the NSRP1 family. Expressed in the intestine, nervous system and head neurons in both larvae and adults. Expressed in the distal tip cell.

It is found in the cytoplasm. It localises to the nucleus. In terms of biological role, required for the cessation of distal tip cell migration at the end of larval morphogenesis. This is Nuclear speckle splicing regulatory protein 1 homolog (ccdc-55) from Caenorhabditis elegans.